A 555-amino-acid chain; its full sequence is MRTSDSHLPLSNLARSDSIEFKDAVINEKWVHSANRRKGHLTPKAPEKKSGWFGGQKSEEELLMERVEQHELEELQTFIAQKLFRVDGIICDEETRILLVEKLMNAKEYPTINHDELAHRYGSSMAGWLRDRLVPSMSDCSSVLQRAAAEFYQNKMSDPLCNWGQLNPEHVSMVAARIAKFSEEMSSKVKWSLLVEPGKFSCHLTEFVQEFNRLDRMFVSNELSDEESLQTAFNANYLTKARSKMVPCAEFSRVKLNDGLGRLDDRNELRNGMFSDEHEFLQEEGYTAKSTYGTTDFIHANYVKGGPLLNTFICAQAPLKNTQEDFWRMVFQEKCQFIVMLNSAVDSSTLGPLDSANRNHCPYYWPRAENESLRFGSFHITCMKVDSKADPLFTITKLKVQKVGGNLLDAEFDEELFLEHWQWDWQYLGDVHWPFRVLRKARQLSTPTIVQCIDGCSKSGTLVSIETALMHFIRGSPITKSLILQSCVFVRLQRRLSVSSVLLYLFIYRVILRWIEPYVNKWYHRAALGLRFKSIGFIQKYNAMIQEFSRITPAY.

2 short sequence motifs (D-box) span residues 96-99 (RILL) and 130-133 (RDRL). One can recognise a Tyrosine-protein phosphatase domain in the interval 207-514 (FVQEFNRLDR…LFIYRVILRW (308 aa)). Positions 253–256 (RVKL) match the RXXL motif; required for cortical localization motif. Residues 266–269 (RNEL) carry the RXXL motif motif. 2 short sequence motifs (RXXL motif; required for cortical localization) span residues 509–512 (RVIL) and 525–528 (RAAL).

Belongs to the protein-tyrosine phosphatase family. As to quaternary structure, part of a complex, consisting of pseudophosphatases egg-3, egg-4, egg-5 and kinase mbk-2; this complex is required for the oocyte-to-zygote transition. Interacts (via tyrosine-protein phosphatase domain) with kinase mbk-2 (via N-terminus); the interaction does not affect mbk-2 kinase activity, is enhanced by mbk-2 tyrosine phosphorylation status and requires prior binding of mbk-2 to egg-4 and egg-5. Interacts with egg-4.

It localises to the cytoplasm. Its subcellular location is the cell cortex. Functionally, probable pseudophosphatase required for the oocyte-to-zygote transition during which it regulates the polarized dispersal of the cortical actin cytoskeleton, the synthesis of the eggshell chitin layer and the formation of the polar bodies after meiosis I and II. Acts as a scaffold to tether kinase mbk-2 and pseudophosphatases egg-4 and egg-5 to the oocyte cortex and thus restricts mbk-2 activity to the cortex during meiosis I. Regulates mbk-2 localization to cytoplasmic foci during meiosis II. Also required for chitin synthase chs-1 localization to the cell cortex of unfertilized oocytes and to cytoplasmic foci in the fertilized embryo. This chain is Protein tyrosine phosphatase-like protein egg-3, found in Caenorhabditis elegans.